Reading from the N-terminus, the 152-residue chain is Transcriptional regulator MraZ (152 aa).

SpoVT-AbrB domains follow at residues 5–52 (ATLV…PLPE) and 81–124 (ASEC…DETT).

The protein belongs to the MraZ family. As to quaternary structure, forms oligomers.

It localises to the cytoplasm. The protein localises to the nucleoid. Functionally, negatively regulates its own expression and that of the subsequent genes in the proximal part of the division and cell wall (dcw) gene cluster. Acts by binding directly to DNA. May also regulate the expression of genes outside the dcw cluster. This is Transcriptional regulator MraZ from Escherichia fergusonii (strain ATCC 35469 / DSM 13698 / CCUG 18766 / IAM 14443 / JCM 21226 / LMG 7866 / NBRC 102419 / NCTC 12128 / CDC 0568-73).